The sequence spans 318 residues: Ubiquitin-like domain-containing CTD phosphatase 1 (318 aa).

A Ubiquitin-like domain is found at 3–81 (LPIIVKWGGQ…IMMMGTREES (79 aa)). Position 117 is an N6-acetyllysine (K117). In terms of domain architecture, FCP1 homology spans 133–294 (PREGKKLLVL…VKLTQYLKEI (162 aa)). Residues D143, D145, and D253 each contribute to the Mg(2+) site.

Mg(2+) serves as cofactor.

It localises to the nucleus. The enzyme catalyses O-phospho-L-seryl-[protein] + H2O = L-seryl-[protein] + phosphate. The catalysed reaction is O-phospho-L-threonyl-[protein] + H2O = L-threonyl-[protein] + phosphate. Dephosphorylates 26S nuclear proteasomes, thereby decreasing their proteolytic activity. Recruited to the 19S regulatory particle of the 26S proteasome through its interaction with 19S component PSMD2/RPN1. Once recruited, dephosphorylates 19S component PSMC2/RPT1 which impairs PSMC2 ATPase activity and disrupts 26S proteasome assembly. Has also been reported to stimulate the proteolytic activity of the 26S proteasome. The protein is Ubiquitin-like domain-containing CTD phosphatase 1 (Ublcp1) of Rattus norvegicus (Rat).